A 189-amino-acid chain; its full sequence is Inner membrane-spanning protein YciB (189 aa).

A run of 5 helical transmembrane segments spans residues 23-43 (ILLATLVLIPATLAQVAFVWW), 54-74 (ITLALVVVMGGATVIFHDAAF), 82-102 (VNWLFAFAFLVAPLFGGKTLI), 120-140 (LNLAWVAFFIALGAINVYVFK), and 150-170 (FKLFGMLGLTLLFVLGQGVYL).

The protein belongs to the YciB family.

The protein localises to the cell inner membrane. In terms of biological role, plays a role in cell envelope biogenesis, maintenance of cell envelope integrity and membrane homeostasis. This Chromohalobacter salexigens (strain ATCC BAA-138 / DSM 3043 / CIP 106854 / NCIMB 13768 / 1H11) protein is Inner membrane-spanning protein YciB.